The primary structure comprises 137 residues: Peptide methionine sulfoxide reductase MsrB (137 aa).

The disordered stretch occupies residues 1-33 (MSNNQDRPGQITDESLRERLSPEAYAVTRRAGT). Residues 13-135 (DESLRERLSP…NSLSLDFKAA (123 aa)) enclose the MsrB domain. The Zn(2+) site is built by C52, C55, C101, and C104. Residue C124 is the Nucleophile of the active site.

Belongs to the MsrB Met sulfoxide reductase family. It depends on Zn(2+) as a cofactor.

It carries out the reaction L-methionyl-[protein] + [thioredoxin]-disulfide + H2O = L-methionyl-(R)-S-oxide-[protein] + [thioredoxin]-dithiol. This is Peptide methionine sulfoxide reductase MsrB from Thioalkalivibrio sulfidiphilus (strain HL-EbGR7).